Here is a 913-residue protein sequence, read N- to C-terminus: Isoleucine--tRNA ligase (913 aa).

The 'HIGH' region motif lies at proline 57 to threonine 67. Glutamate 549 is an L-isoleucyl-5'-AMP binding site. The 'KMSKS' region motif lies at lysine 590–serine 594. Position 593 (lysine 593) interacts with ATP. Residues cysteine 881, cysteine 884, cysteine 901, and cysteine 904 each contribute to the Zn(2+) site.

It belongs to the class-I aminoacyl-tRNA synthetase family. IleS type 1 subfamily. Monomer. The cofactor is Zn(2+).

The protein localises to the cytoplasm. The catalysed reaction is tRNA(Ile) + L-isoleucine + ATP = L-isoleucyl-tRNA(Ile) + AMP + diphosphate. Its function is as follows. Catalyzes the attachment of isoleucine to tRNA(Ile). As IleRS can inadvertently accommodate and process structurally similar amino acids such as valine, to avoid such errors it has two additional distinct tRNA(Ile)-dependent editing activities. One activity is designated as 'pretransfer' editing and involves the hydrolysis of activated Val-AMP. The other activity is designated 'posttransfer' editing and involves deacylation of mischarged Val-tRNA(Ile). The sequence is that of Isoleucine--tRNA ligase from Fervidobacterium nodosum (strain ATCC 35602 / DSM 5306 / Rt17-B1).